We begin with the raw amino-acid sequence, 1892 residues long: MAGHGAGGRRASTSRAAARRVEAETNENDDLAAAAARDLAAAEVPAEVPHFELDEDPAFWKDRNVQVLIRIRPINAAESTANGQRRCLVQDSSKTLSWTGHPDTMFTFDHVACETISQEKLFGVVGLPMVENCMSGYNGCLFAYGQTGSGKTYTMMGELSKLDNELSKDSGLTPRIFEYLFARIKEEEERRREDKLKYICKCSFLEIYNEQITDLLEPSSTNLQIREDIKKGVYVENLMECYVSSVKDVMMLLLQGVANRKMAATNMNSESSRSHSVFTCVIESRWERDSMTHLRFGRLNLVDLAGSERQKSSGAEGERLKEAANINRSLSTLGLVIMTLVDVANGKNRHVPYRDSRLTFLLQDSLGGNSKTTIVANVSPSICSSSETLSTLKFAQRAKLIQNNAKVNEDASGDVMSLQRQIEDLKDQLTCLKKQQNMPGSPSFKLLKSGYGNEFNSLHGVDDQSACDLELLKQKVIHLEDVLVGSLRREKSAETEIRKLECEIKSLNRLVNLMESDTRHLRTTVKLRDEKIRRLELLADNQISSDGYLMDENAAMFQEIQLLQEQINDNSQLTQFALENKRLIEQVRMLEKFSKQGEREMLLTEISLLRNHFLHILEQKYARPPKNMEAQGDVTIKELETCRKELDACLENNVLLAREVNKLRCELKQYQKCGTGQVAPEVVESSVIPGINQKQHDQAGWCGSYLASIDVERQFVDVGITTDITESLELTPPSEIYSENQDSPSRLHFSDPEICDLKNSTKVLEYNSSRNLLDKGIILSGQLENECGLNSVQNDEISLVKENAEKMYGHDEISVYRQNEILHSSEQLLQDELTHIKSLNEGLKEKLIIMAEESTKLSEIIVAKDVEIATLSEEWESAIVDLTSFLTDGCSSLDDAYQNIDNMISSFPYNNHSVSEHVEKAMKVSIEKEKIISRLQIELQAAQRMGREVKEKLHILRGATLAITEAQLLDNDESQEALKLLDLMRQKDCTVQELNDNVKQKSCLFAEATEGYSRHECHLPDNVGTVAEISHNRDGSEVNQANTHYQAKLEDVLHLVEDKSNKVLALFSNFEEAQETMEEAETMLSSLLKANEELKLEKDSCRQAVELLFAERTSLINDLQELEASNSFTAQRYDKLHEQVNGCVAEMTNLATIIKESFHQVQRVTTVELFAFCSEVISFGQDLRKWIYESRSYLVNMGALLEEQGNSYAEQNRRTNSSTYAGVSQQVESCSRQLGGMNGDIFPGTYMVVDGKEKASVHVVPFGSNAELEDTNVERTFDMDYASLRREFDRKSDVAEGLSFDLKLLQESTSQAKDMKDKADEISDALVSVQRELEKKTSAMESILKQQKVLEEELAENGAALLILRSELEHSESLSSELFKENNNLKVMLEEEAMMISETKAMLEDKSKVIEGLEHEILLLNSSEEGRLMSQIKELNDNLKIISIDKGNLEEEILKLTDKLEMAVALAEENEAASIEARQAAEISKVYAEEKEEEVRILERSVEELESTITVLEEEVCNLKEEVRSYQIYKKSEAEQAQEMFIVDSTSKCDATEQLCPGRCQLEKRLKAEIIAHQDARRKIECLTMEASCKDEEVRQYKEHIAELVLHSEAQSLLFQEKYQEMEHMISKQKFGLHESNSDTGHTKFEKPSGRTRGSGSPFRCISSIVQQMNSEKDQEISVARQRIEELEGLVCNKQKEICMLTSRLAAVDSMTHDIIRELLGVKLDMTNYANMLDQEELQKLLMASQQQIEQSKAKDVELDMLKEQFDHLIQERDSLFDDMDQRKADLLESQLLIEQLEQREQMLEAQNGILQMEKDNLQQRIMEMDEEIQLLVGSNQAIAETTFQMGSNHRSANSEFSRRLAQSDMLLSHARHEHSRLQAAKSSRTRRGSHQ.

Residues 1-28 are disordered; that stretch reads MAGHGAGGRRASTSRAAARRVEAETNEN. In terms of domain architecture, Kinesin motor spans 64–401; that stretch reads NVQVLIRIRP…LKFAQRAKLI (338 aa). Residue 145 to 152 coordinates ATP; that stretch reads GQTGSGKT. Coiled coils occupy residues 406–438, 486–526, 1066–1139, 1303–1357, and 1396–1528; these read KVNEDASGDVMSLQRQIEDLKDQLTCLKKQQNM, SLRR…TTVK, LFSN…LHEQ, KLLQ…LAEN, and ISET…SYQI. Over residues 1633-1649 the composition is skewed to basic and acidic residues; that stretch reads LHESNSDTGHTKFEKPS. The tract at residues 1633–1656 is disordered; it reads LHESNSDTGHTKFEKPSGRTRGSG. Residues 1780–1841 adopt a coiled-coil conformation; it reads MDQRKADLLE…LVGSNQAIAE (62 aa). Residues 1870–1892 form a disordered region; the sequence is HARHEHSRLQAAKSSRTRRGSHQ.

It belongs to the TRAFAC class myosin-kinesin ATPase superfamily. Kinesin family. KIN-12 subfamily.

The protein is Kinesin-like protein KIN-12E of Oryza sativa subsp. japonica (Rice).